The sequence spans 401 residues: 1-deoxy-D-xylulose 5-phosphate reductoisomerase (401 aa).

Positions 10, 11, 12, 13, 36, 38, and 124 each coordinate NADPH. Lys-125 provides a ligand contact to 1-deoxy-D-xylulose 5-phosphate. Glu-126 serves as a coordination point for NADPH. Residue Asp-150 participates in Mn(2+) binding. 1-deoxy-D-xylulose 5-phosphate contacts are provided by Ser-151, Glu-152, Ser-186, and His-209. Glu-152 provides a ligand contact to Mn(2+). Gly-215 contributes to the NADPH binding site. Residues Ser-222, Asn-227, Lys-228, and Glu-231 each coordinate 1-deoxy-D-xylulose 5-phosphate. Glu-231 contacts Mn(2+).

This sequence belongs to the DXR family. Requires Mg(2+) as cofactor. Mn(2+) serves as cofactor.

The catalysed reaction is 2-C-methyl-D-erythritol 4-phosphate + NADP(+) = 1-deoxy-D-xylulose 5-phosphate + NADPH + H(+). It functions in the pathway isoprenoid biosynthesis; isopentenyl diphosphate biosynthesis via DXP pathway; isopentenyl diphosphate from 1-deoxy-D-xylulose 5-phosphate: step 1/6. Catalyzes the NADPH-dependent rearrangement and reduction of 1-deoxy-D-xylulose-5-phosphate (DXP) to 2-C-methyl-D-erythritol 4-phosphate (MEP). The sequence is that of 1-deoxy-D-xylulose 5-phosphate reductoisomerase from Vibrio parahaemolyticus serotype O3:K6 (strain RIMD 2210633).